The sequence spans 187 residues: Cytochrome b-245 chaperone 1 (187 aa).

Residues G20–G42 traverse the membrane as a helical segment. A disordered region spans residues E167–S187. Phosphoserine occurs at positions 168 and 170.

Belongs to the CYBC1 family. As to quaternary structure, interacts with CYBB; CYBC1 may act as a chaperone stabilizing Cytochrome b-245 heterodimer.

It is found in the endoplasmic reticulum membrane. Functions as a chaperone necessary for a stable expression of the CYBA and CYBB subunits of the cytochrome b-245 heterodimer. Controls the phagocyte respiratory burst and is essential for innate immunity. The protein is Cytochrome b-245 chaperone 1 of Rattus norvegicus (Rat).